We begin with the raw amino-acid sequence, 459 residues long: Probable acetate kinase (459 aa).

Asn-9 provides a ligand contact to Mg(2+). Lys-16 is an ATP binding site. Arg-100 contacts substrate. Asp-156 functions as the Proton donor/acceptor in the catalytic mechanism. Residues 216 to 220 (HLGSG) and 299 to 301 (DFR) contribute to the ATP site. Residues 308–338 (TTTSSPTPSPNPNPNPNPDPNPDPNPDPQNQ) are disordered. Pro residues predominate over residues 314 to 334 (TPSPNPNPNPNPDPNPDPNPD). Position 441 (Glu-441) interacts with Mg(2+).

It belongs to the acetokinase family. It depends on Mg(2+) as a cofactor.

It catalyses the reaction acetate + ATP = acetyl phosphate + ADP. The protein operates within metabolic intermediate biosynthesis; acetyl-CoA biosynthesis; acetyl-CoA from acetate: step 1/2. The chain is Probable acetate kinase from Chaetomium globosum (strain ATCC 6205 / CBS 148.51 / DSM 1962 / NBRC 6347 / NRRL 1970) (Soil fungus).